The chain runs to 72 residues: Translation initiation factor IF-1 (72 aa).

Positions 1 to 72 (MAKDDVIEVE…NRGRITYRFK (72 aa)) constitute an S1-like domain. Tyr60 carries the post-translational modification Phosphotyrosine.

This sequence belongs to the IF-1 family. Component of the 30S ribosomal translation pre-initiation complex which assembles on the 30S ribosome in the order IF-2 and IF-3, IF-1 and N-formylmethionyl-tRNA(fMet); mRNA recruitment can occur at any time during PIC assembly.

It localises to the cytoplasm. In terms of biological role, one of the essential components for the initiation of protein synthesis. Stabilizes the binding of IF-2 and IF-3 on the 30S subunit to which N-formylmethionyl-tRNA(fMet) subsequently binds. Helps modulate mRNA selection, yielding the 30S pre-initiation complex (PIC). Upon addition of the 50S ribosomal subunit IF-1, IF-2 and IF-3 are released leaving the mature 70S translation initiation complex. The protein is Translation initiation factor IF-1 of Bacillus thuringiensis (strain Al Hakam).